A 573-amino-acid polypeptide reads, in one-letter code: DNA ligase (573 aa).

Glutamate 250 is a binding site for ATP. Lysine 252 functions as the N6-AMP-lysine intermediate in the catalytic mechanism. Arginine 257, arginine 272, glutamate 301, phenylalanine 342, arginine 432, and lysine 438 together coordinate ATP.

It belongs to the ATP-dependent DNA ligase family. It depends on Mg(2+) as a cofactor.

It carries out the reaction ATP + (deoxyribonucleotide)n-3'-hydroxyl + 5'-phospho-(deoxyribonucleotide)m = (deoxyribonucleotide)n+m + AMP + diphosphate.. Functionally, DNA ligase that seals nicks in double-stranded DNA during DNA replication, DNA recombination and DNA repair. This Methanococcus maripaludis (strain C5 / ATCC BAA-1333) protein is DNA ligase.